Here is a 264-residue protein sequence, read N- to C-terminus: Phosphonoacetaldehyde hydrolase (264 aa).

Catalysis depends on D9, which acts as the Nucleophile. The Mg(2+) site is built by D9 and A11. K50 serves as the catalytic Schiff-base intermediate with substrate. Residue D183 coordinates Mg(2+).

It belongs to the HAD-like hydrolase superfamily. PhnX family. As to quaternary structure, homodimer. Mg(2+) is required as a cofactor.

It carries out the reaction phosphonoacetaldehyde + H2O = acetaldehyde + phosphate + H(+). In terms of biological role, involved in phosphonate degradation. The protein is Phosphonoacetaldehyde hydrolase of Bacillus cereus (strain ZK / E33L).